Reading from the N-terminus, the 334-residue chain is Glycerol-3-phosphate dehydrogenase [NAD(P)+] (334 aa).

Trp14, Arg34, and Lys107 together coordinate NADPH. Sn-glycerol 3-phosphate-binding residues include Lys107 and Gly135. NADPH is bound at residue Ala139. Sn-glycerol 3-phosphate is bound by residues Lys190, Asp243, Ser253, Arg254, and Asn255. The active-site Proton acceptor is Lys190. Arg254 serves as a coordination point for NADPH. Residues Val272 and Glu273 each coordinate NADPH.

It belongs to the NAD-dependent glycerol-3-phosphate dehydrogenase family.

It localises to the cytoplasm. The catalysed reaction is sn-glycerol 3-phosphate + NAD(+) = dihydroxyacetone phosphate + NADH + H(+). It carries out the reaction sn-glycerol 3-phosphate + NADP(+) = dihydroxyacetone phosphate + NADPH + H(+). It participates in membrane lipid metabolism; glycerophospholipid metabolism. Functionally, catalyzes the reduction of the glycolytic intermediate dihydroxyacetone phosphate (DHAP) to sn-glycerol 3-phosphate (G3P), the key precursor for phospholipid synthesis. In Neorickettsia sennetsu (strain ATCC VR-367 / Miyayama) (Ehrlichia sennetsu), this protein is Glycerol-3-phosphate dehydrogenase [NAD(P)+].